The primary structure comprises 488 residues: Protein nucleotidyltransferase YdiU (488 aa).

Positions 91, 93, 94, 114, 126, 127, 177, and 184 each coordinate ATP. The Proton acceptor role is filled by D253. Positions 254 and 263 each coordinate Mg(2+). ATP is bound at residue D263.

Belongs to the SELO family. Mg(2+) is required as a cofactor. The cofactor is Mn(2+).

It carries out the reaction L-seryl-[protein] + ATP = 3-O-(5'-adenylyl)-L-seryl-[protein] + diphosphate. The catalysed reaction is L-threonyl-[protein] + ATP = 3-O-(5'-adenylyl)-L-threonyl-[protein] + diphosphate. It catalyses the reaction L-tyrosyl-[protein] + ATP = O-(5'-adenylyl)-L-tyrosyl-[protein] + diphosphate. The enzyme catalyses L-histidyl-[protein] + UTP = N(tele)-(5'-uridylyl)-L-histidyl-[protein] + diphosphate. It carries out the reaction L-seryl-[protein] + UTP = O-(5'-uridylyl)-L-seryl-[protein] + diphosphate. The catalysed reaction is L-tyrosyl-[protein] + UTP = O-(5'-uridylyl)-L-tyrosyl-[protein] + diphosphate. Its function is as follows. Nucleotidyltransferase involved in the post-translational modification of proteins. It can catalyze the addition of adenosine monophosphate (AMP) or uridine monophosphate (UMP) to a protein, resulting in modifications known as AMPylation and UMPylation. This Bacillus cereus (strain ATCC 14579 / DSM 31 / CCUG 7414 / JCM 2152 / NBRC 15305 / NCIMB 9373 / NCTC 2599 / NRRL B-3711) protein is Protein nucleotidyltransferase YdiU.